A 26-amino-acid chain; its full sequence is SPAPPACDPRLLNKLLRDDHVLHGRL.

It belongs to the EPO/TPO family.

The protein localises to the secreted. Its function is as follows. Lineage-specific cytokine affecting the proliferation and maturation of megakaryocytes from their committed progenitor cells. It acts at a late stage of megakaryocyte development. It may be the major physiological regulator of circulating platelets. This chain is Thrombopoietin (THPO), found in Sus scrofa (Pig).